A 466-amino-acid chain; its full sequence is Ribulose bisphosphate carboxylase/oxygenase activase, chloroplastic (466 aa).

A chloroplast-targeting transit peptide spans 1–48; the sequence is MAAAFSSTVGAPASTPTNFLGKKLKKQVTSAVNYHGKSSNINRFKVMA. Position 156–163 (156–163) interacts with ATP; it reads GGKGQGKS. A disordered region spans residues 429 to 454; that stretch reads QGAQQAGNLPVPEGCTDPVAKNFDPT.

Belongs to the RuBisCO activase family.

It localises to the plastid. Its subcellular location is the chloroplast stroma. In terms of biological role, activation of RuBisCO (ribulose-1,5-bisphosphate carboxylase/oxygenase; EC 4.1.1.39) involves the ATP-dependent carboxylation of the epsilon-amino group of lysine leading to a carbamate structure. The chain is Ribulose bisphosphate carboxylase/oxygenase activase, chloroplastic (RCA) from Oryza sativa subsp. japonica (Rice).